The sequence spans 281 residues: Energy-coupling factor transporter ATP-binding protein EcfA1 (281 aa).

One can recognise an ABC transporter domain in the interval 7-242 (IAAEDITFRY…NQDLIKIGLD (236 aa)). Position 42 to 49 (42 to 49 (GHNGSGKS)) interacts with ATP.

It belongs to the ABC transporter superfamily. Energy-coupling factor EcfA family. As to quaternary structure, forms a stable energy-coupling factor (ECF) transporter complex composed of 2 membrane-embedded substrate-binding proteins (S component), 2 ATP-binding proteins (A component) and 2 transmembrane proteins (T component).

It localises to the cell membrane. Its function is as follows. ATP-binding (A) component of a common energy-coupling factor (ECF) ABC-transporter complex. Unlike classic ABC transporters this ECF transporter provides the energy necessary to transport a number of different substrates. The protein is Energy-coupling factor transporter ATP-binding protein EcfA1 of Bacillus licheniformis (strain ATCC 14580 / DSM 13 / JCM 2505 / CCUG 7422 / NBRC 12200 / NCIMB 9375 / NCTC 10341 / NRRL NRS-1264 / Gibson 46).